A 442-amino-acid polypeptide reads, in one-letter code: GPI mannosyltransferase 1 (442 aa).

8 helical membrane passes run 22 to 42 (INLT…LIVF), 95 to 115 (ILIH…IIAY), 177 to 197 (LASI…IYSI), 242 to 262 (AFTF…IFLF), 307 to 327 (MIVA…ITLV), 336 to 356 (LLLE…QYFI), 361 to 381 (ILPL…ILFA), and 408 to 428 (IWVA…KLIL).

This sequence belongs to the PIGM family.

It localises to the endoplasmic reticulum membrane. It participates in glycolipid biosynthesis; glycosylphosphatidylinositol-anchor biosynthesis. Functionally, mannosyltransferase involved in glycosylphosphatidylinositol-anchor biosynthesis. Transfers the first alpha-1,4-mannose to GlcN-acyl-PI during GPI precursor assembly. The polypeptide is GPI mannosyltransferase 1 (pigm) (Dictyostelium discoideum (Social amoeba)).